A 688-amino-acid polypeptide reads, in one-letter code: MTTQNFLVEIGTEELPPKALKTLATSFADNVEAELIQAGLSFDKIEWFAAPRRLAVKVLNLATQQPSKEIEKRGPAVSAAFDAEGKPTKAAEGWARGCGITVEQAERIATDKGEWLVHCAKIEGQPTKNLLNDIVANALAKLPIPKPMRWADKTVQFIRPVHTVTMLLGDELIEGEILGVASARTIRGHRFLGEKEFEIQHADQYPQLLREKGSVVADFNERKAEILAKSQAKATALGGVADIEESLLEEVTSLVEYPNVLAAKFEERFLAVPAEALVYTMKGDQKYFPIYDKDGKLLPHFIFVSNINPEDPTAIIEGNEKVVRPRLTDAEFFFKTDLKQKLVDRLPRLETVLFQQQLGTLKDKTDRIEQLAGEIAKQIGADEAKAKRAGLLSKCDLMTNMVFEFTDTQGVMGMHYARHDGEDEEVAVALNEQYMPRFAGDELPKSLVASAVALADKFDTLTGIFGIGQAPKGSADPFALRRAALGALRIIVEKNLPLDLEDLVKKSAALFSDKLTNKNVVADVVDFMLGRFRAWYQDEGIAVDVIQAVLARRPTRPADFDARVRAVSHFRTLDSAEALAAANKRVSNILAKADAAIGEINLTACVEPAEKALAEAVLVLRTEVQPLIAQGDYTAVLDKLANLRAPVDSFFDNVMVNAEDPALRQNRLAILNTLQGLFLQVADISVLQ.

Belongs to the class-II aminoacyl-tRNA synthetase family. In terms of assembly, tetramer of two alpha and two beta subunits.

It is found in the cytoplasm. It catalyses the reaction tRNA(Gly) + glycine + ATP = glycyl-tRNA(Gly) + AMP + diphosphate. The polypeptide is Glycine--tRNA ligase beta subunit (Haemophilus influenzae (strain PittEE)).